The chain runs to 130 residues: Protein LLP homolog (130 aa).

Residues 1-21 are compositionally biased toward basic residues; the sequence is MAKSLRSKWKRKMRAEKRKKN. Disordered stretches follow at residues 1-23 and 57-76; these read MAKSLRSKWKRKMRAEKRKKNAP and QEKMQCEEGRCDGADEEKDD. Positions 10–78 form a coiled coil; it reads KRKMRAEKRK…GADEEKDDMK (69 aa). A Glycyl lysine isopeptide (Lys-Gly) (interchain with G-Cter in SUMO2) cross-link involves residue Lys78. Basic residues predominate over residues 104-124; it reads RQRKRLKAKREKKRGKSRAKA. The segment at 104 to 130 is disordered; sequence RQRKRLKAKREKKRGKSRAKAAKGLAW.

Belongs to the learning-associated protein family. In terms of assembly, interacts with CTCF, MYO1C and with the transcriptional machinery, including RNA polymerase II and TBP. As to expression, widely expressed, with high levels in testis and spleen and low levels in heart. In the brain, expressed in the cortex and hippocampus, and at very low levels in the cerebellum.

It is found in the nucleus. It localises to the nucleolus. Its subcellular location is the chromosome. In hippocampal neurons, regulates dendritic and spine growth and synaptic transmission. In Mus musculus (Mouse), this protein is Protein LLP homolog (Llph).